A 66-amino-acid polypeptide reads, in one-letter code: Small ribosomal subunit protein bS21 (66 aa).

Belongs to the bacterial ribosomal protein bS21 family.

The sequence is that of Small ribosomal subunit protein bS21 from Rickettsia felis (strain ATCC VR-1525 / URRWXCal2) (Rickettsia azadi).